We begin with the raw amino-acid sequence, 211 residues long: Receptor expression-enhancing protein 6 (211 aa).

Transmembrane regions (helical) follow at residues 44–64 (LSLY…IGFV) and 89–109 (WVVY…LSWF). The tract at residues 190–211 (AGPSTPLEADLKPSQTPQPKDK) is disordered. The span at 202 to 211 (PSQTPQPKDK) shows a compositional bias: polar residues.

Belongs to the DP1 family. In terms of assembly, interacts with STX3. Interacts with clathrin. Expressed in circumvallate papillae and testis. Expressed in the retina. Isoform 1 is predominantly present in mature optic cups. Isoform 1 expression is confined to the cell body and inner segment of developing rod photoreceptor cells.

It localises to the endoplasmic reticulum membrane. It is found in the cytoplasmic vesicle. The protein resides in the clathrin-coated vesicle membrane. Functionally, required for correct function and survival of retinal photoreceptors. Required for retinal development. In rod photoreceptors, facilitates stability and/or trafficking of guanylate cyclases and is required to maintain endoplasmic reticulum and mitochondrial homeostasis. May play a role in clathrin-coated intracellular vesicle trafficking of proteins from the endoplasmic reticulum to the retinal rod plasma membrane. The polypeptide is Receptor expression-enhancing protein 6 (REEP6) (Homo sapiens (Human)).